The following is a 390-amino-acid chain: Protein shisa-9 (390 aa).

Positions 1–22 (MTGIRAIFYYFLVDLLTLLCWA) are cleaved as a signal peptide. Residues 23 to 134 (QGKGGQHFGS…DPSHDPTRDK (112 aa)) are Extracellular-facing. Residues asparagine 40 and asparagine 74 are each glycosylated (N-linked (GlcNAc...) asparagine). A helical membrane pass occupies residues 135-155 (TNLIVYIICGVVAVMVLVGIF). At 156 to 390 (TKLGLEKAHR…VTNSKTEVTV (235 aa)) the chain is on the cytoplasmic side.

The protein belongs to the shisa family. SHISA9 subfamily. Component of some AMPA receptors (ionotropic glutamate receptors) complex.

The protein localises to the cell projection. Its subcellular location is the dendritic spine membrane. It is found in the synapse. Regulator of short-term neuronal synaptic plasticity in the dentate gyrus. Associates with AMPA receptors (ionotropic glutamate receptors) in synaptic spines and promotes AMPA receptor desensitization at excitatory synapses. This chain is Protein shisa-9 (shisa9), found in Xenopus tropicalis (Western clawed frog).